The sequence spans 115 residues: Large ribosomal subunit protein uL24 (115 aa).

Disordered stretches follow at residues 45–77 and 96–115; these read VRQSQKNPQGGRLNKEMPMSASNVMLVDPSTGK and KASGESLGQIAPAKASKAAS.

Belongs to the universal ribosomal protein uL24 family. Part of the 50S ribosomal subunit.

Functionally, one of two assembly initiator proteins, it binds directly to the 5'-end of the 23S rRNA, where it nucleates assembly of the 50S subunit. In terms of biological role, one of the proteins that surrounds the polypeptide exit tunnel on the outside of the subunit. The protein is Large ribosomal subunit protein uL24 of Rhodopirellula baltica (strain DSM 10527 / NCIMB 13988 / SH1).